A 350-amino-acid polypeptide reads, in one-letter code: Uroporphyrinogen decarboxylase (350 aa).

Residues 23–27, Asp-73, Tyr-150, Thr-205, and His-322 each bind substrate; that span reads RQAGR.

The protein belongs to the uroporphyrinogen decarboxylase family. In terms of assembly, homodimer.

It is found in the cytoplasm. The enzyme catalyses uroporphyrinogen III + 4 H(+) = coproporphyrinogen III + 4 CO2. It participates in porphyrin-containing compound metabolism; protoporphyrin-IX biosynthesis; coproporphyrinogen-III from 5-aminolevulinate: step 4/4. Functionally, catalyzes the decarboxylation of four acetate groups of uroporphyrinogen-III to yield coproporphyrinogen-III. The chain is Uroporphyrinogen decarboxylase from Methylococcus capsulatus (strain ATCC 33009 / NCIMB 11132 / Bath).